Reading from the N-terminus, the 294-residue chain is Phenylalanine-4-hydroxylase (294 aa).

Residues 1-20 (MSGDGLSNGPPPGARPDWTI) form a disordered region. Fe cation is bound by residues His129, His134, and Glu175.

Belongs to the biopterin-dependent aromatic amino acid hydroxylase family. It depends on Fe(2+) as a cofactor.

It catalyses the reaction (6R)-L-erythro-5,6,7,8-tetrahydrobiopterin + L-phenylalanine + O2 = (4aS,6R)-4a-hydroxy-L-erythro-5,6,7,8-tetrahydrobiopterin + L-tyrosine. The protein operates within amino-acid degradation; L-phenylalanine degradation; acetoacetate and fumarate from L-phenylalanine: step 1/6. This Caulobacter vibrioides (strain ATCC 19089 / CIP 103742 / CB 15) (Caulobacter crescentus) protein is Phenylalanine-4-hydroxylase (phhA).